Here is a 125-residue protein sequence, read N- to C-terminus: Small ribosomal subunit protein uS13 (125 aa).

Belongs to the universal ribosomal protein uS13 family. In terms of assembly, part of the 30S ribosomal subunit. Forms a loose heterodimer with protein S19. Forms two bridges to the 50S subunit in the 70S ribosome.

Located at the top of the head of the 30S subunit, it contacts several helices of the 16S rRNA. In the 70S ribosome it contacts the 23S rRNA (bridge B1a) and protein L5 of the 50S subunit (bridge B1b), connecting the 2 subunits; these bridges are implicated in subunit movement. Contacts the tRNAs in the A and P-sites. This is Small ribosomal subunit protein uS13 from Rickettsia akari (strain Hartford).